The chain runs to 92 residues: Large ribosomal subunit protein uL23 (92 aa).

This sequence belongs to the universal ribosomal protein uL23 family. Part of the 50S ribosomal subunit. Contacts protein L29, and trigger factor when it is bound to the ribosome.

Its function is as follows. One of the early assembly proteins it binds 23S rRNA. One of the proteins that surrounds the polypeptide exit tunnel on the outside of the ribosome. Forms the main docking site for trigger factor binding to the ribosome. The polypeptide is Large ribosomal subunit protein uL23 (Bdellovibrio bacteriovorus (strain ATCC 15356 / DSM 50701 / NCIMB 9529 / HD100)).